The sequence spans 157 residues: Small ribosomal subunit protein uS13 (157 aa).

Belongs to the universal ribosomal protein uS13 family. Part of the 30S ribosomal subunit. Forms a loose heterodimer with protein S19. Forms two bridges to the 50S subunit in the 70S ribosome.

Functionally, located at the top of the head of the 30S subunit, it contacts several helices of the 16S rRNA. In the 70S ribosome it contacts the 23S rRNA (bridge B1a) and protein L5 of the 50S subunit (bridge B1b), connecting the 2 subunits; these bridges are implicated in subunit movement. The sequence is that of Small ribosomal subunit protein uS13 from Thermofilum pendens (strain DSM 2475 / Hrk 5).